A 911-amino-acid chain; its full sequence is Viral IRF4-like protein (911 aa).

A DNA-binding region (IRF tryptophan pentad repeat) is located at residues 7-114 (SEWATLWIID…GSYVVWQLVR (108 aa)). 4 disordered regions span residues 147–184 (TTAT…PRKS), 211–302 (ASTS…SRLP), 494–537 (GGAP…PYVC), and 681–727 (ELQE…FFDP). Residues 211-221 (ASTSGMGSSGT) are compositionally biased toward low complexity. Composition is skewed to polar residues over residues 222-231 (RQVTQASSFT) and 495-505 (GAPNQGLSHTQ). Basic residues predominate over residues 697–710 (RRPRSRSPHGRRTP).

Belongs to the IRF family. Interacts with host MDM2; this interaction facilitates the proteasomal degradation of TP53/p53. Interacts with host IRF7; this interaction prevents IRF7 dimerization and subsequent activation.

The protein resides in the host nucleus. Functionally, plays a role in host cell apoptosis modulation by promoting TP53/p53 ubiquitination and subsequent degradation and thus down-regulating TP53/p53-mediated apoptosis. Works as a potential viral transcription factor to modulate host gene expression to build favorable environments for the viral lytic life cycle and greatly accelerates the induction of an immediate early gene RTA, early genes ORF36 and ORF57, late genes ORF25 and ORF64, and latent genes LANA1 and v-IRF3. Inhibits host interferon-alpha production by interacting with host IRF7 and preventing IRF7 dimerization. The polypeptide is Viral IRF4-like protein (vIRF-4) (Homo sapiens (Human)).